The sequence spans 212 residues: 3-isopropylmalate dehydratase small subunit (212 aa).

The protein belongs to the LeuD family. LeuD type 1 subfamily. In terms of assembly, heterodimer of LeuC and LeuD.

It catalyses the reaction (2R,3S)-3-isopropylmalate = (2S)-2-isopropylmalate. It functions in the pathway amino-acid biosynthesis; L-leucine biosynthesis; L-leucine from 3-methyl-2-oxobutanoate: step 2/4. Its function is as follows. Catalyzes the isomerization between 2-isopropylmalate and 3-isopropylmalate, via the formation of 2-isopropylmaleate. This is 3-isopropylmalate dehydratase small subunit from Nitrosomonas eutropha (strain DSM 101675 / C91 / Nm57).